The chain runs to 430 residues: Asparagine--tRNA ligase (430 aa).

It belongs to the class-II aminoacyl-tRNA synthetase family. In terms of assembly, homodimer.

Its subcellular location is the cytoplasm. The catalysed reaction is tRNA(Asn) + L-asparagine + ATP = L-asparaginyl-tRNA(Asn) + AMP + diphosphate + H(+). In Staphylococcus aureus (strain MRSA252), this protein is Asparagine--tRNA ligase.